The primary structure comprises 116 residues: Ribosome-binding factor A (116 aa).

This sequence belongs to the RbfA family. In terms of assembly, monomer. Binds 30S ribosomal subunits, but not 50S ribosomal subunits or 70S ribosomes.

The protein resides in the cytoplasm. Functionally, one of several proteins that assist in the late maturation steps of the functional core of the 30S ribosomal subunit. Associates with free 30S ribosomal subunits (but not with 30S subunits that are part of 70S ribosomes or polysomes). Required for efficient processing of 16S rRNA. May interact with the 5'-terminal helix region of 16S rRNA. The polypeptide is Ribosome-binding factor A (Streptococcus pyogenes serotype M28 (strain MGAS6180)).